Reading from the N-terminus, the 226-residue chain is Large ribosomal subunit protein mL67 (226 aa).

The protein belongs to the mitochondrion-specific ribosomal protein mL67 family. In terms of assembly, component of the mitochondrial large ribosomal subunit (mt-LSU). Mature yeast 74S mitochondrial ribosomes consist of a small (37S) and a large (54S) subunit. The 37S small subunit contains a 15S ribosomal RNA (15S mt-rRNA) and 34 different proteins. The 54S large subunit contains a 21S rRNA (21S mt-rRNA) and 46 different proteins.

The protein resides in the nucleus. It localises to the mitochondrion. Component of the mitochondrial ribosome (mitoribosome), a dedicated translation machinery responsible for the synthesis of mitochondrial genome-encoded proteins, including at least some of the essential transmembrane subunits of the mitochondrial respiratory chain. The mitoribosomes are attached to the mitochondrial inner membrane and translation products are cotranslationally integrated into the membrane. mL67/MHR1 also has extraribosomal functions, being involved in regulation of mitochondrial DNA recombination, maintenance and repair, and generation of homoplasmic cells. mL67/MHR1 also acts as transcription factor involved in regulation of RNA polymerase II-dependent transcription. In Saccharomyces cerevisiae (strain ATCC 204508 / S288c) (Baker's yeast), this protein is Large ribosomal subunit protein mL67 (MHR1).